The primary structure comprises 72 residues: Sperm protein associated with the nucleus on the X chromosome N1 (72 aa).

A disordered region spans residues 1–40; it reads MEKPTSSTNGEKRKSPCDSNSKNDEMQETPNRDLVLEPSL. Over residues 10-35 the composition is skewed to basic and acidic residues; the sequence is GEKRKSPCDSNSKNDEMQETPNRDLV.

This sequence belongs to the SPAN-X family.

The polypeptide is Sperm protein associated with the nucleus on the X chromosome N1 (SPANXN1) (Pan troglodytes (Chimpanzee)).